The chain runs to 248 residues: Pulmonary surfactant-associated protein A (248 aa).

Positions 1-20 (MSLGSLAFTLFLTVVAGIKC) are cleaved as a signal peptide. N21 carries an N-linked (GlcNAc...) asparagine glycan. In terms of domain architecture, Collagen-like spans 28–100 (GSPGIPGTPG…PGERGLPGFP (73 aa)). The interval 28-100 (GSPGIPGTPG…PGERGLPGFP (73 aa)) is disordered. 4-hydroxyproline is present on residues P30, P33, P36, P42, P54, P57, P63, P67, P70, and P76. The span at 42–51 (PGRDGRDGIK) shows a compositional bias: basic and acidic residues. Positions 54-65 (PGPPGPMGPPGG) are enriched in pro residues. The segment covering 69 to 82 (LPGRDGLPGAPGAP) has biased composition (low complexity). A compositionally biased stretch (basic and acidic residues) spans 84–93 (EHGDKGEPGE). The C-type lectin domain occupies 132–248 (LSVGDKVFST…LQYRLAICEF (117 aa)). Disulfide bonds link C155/C246 and C224/C238. The N-linked (GlcNAc...) asparagine glycan is linked to N207. The Ca(2+) site is built by E215, R217, N234, and D235.

The protein belongs to the SFTPA family. As to quaternary structure, oligomeric complex of 6 set of homotrimers.

It localises to the secreted. Its subcellular location is the extracellular space. It is found in the extracellular matrix. The protein localises to the surface film. Its function is as follows. In presence of calcium ions, it binds to surfactant phospholipids and contributes to lower the surface tension at the air-liquid interface in the alveoli of the mammalian lung and is essential for normal respiration. Enhances the expression of MYO18A/SP-R210 on alveolar macrophages. This chain is Pulmonary surfactant-associated protein A (Sftpa1), found in Mus musculus (Mouse).